We begin with the raw amino-acid sequence, 843 residues long: Major vault protein alpha (843 aa).

An N-acetylalanine modification is found at Ala-2. 9 MVP repeats span residues Ala-2–Arg-56, Asn-57–Ala-111, Leu-112–Lys-163, Ala-164–Asn-216, Ala-217–His-272, Ile-273–Ile-324, Tyr-325–Ser-376, Ile-377–Val-442, and Val-443–Pro-505. Positions Gln-643–Glu-663 are disordered. Basic and acidic residues predominate over residues Ala-646–Glu-663.

The vault ribonucleoprotein particle is a huge (400 A x 670 A) cage structure of 12.9 MDa. It consists of a dimer of half-vaults, with each half-vault comprising 39 identical major vault protein (MVP) chains. Dictyostelium is one of the few organisms in which the major component is actually two proteins (alpha and beta).

It is found in the cytoplasm. It localises to the nucleus. Functionally, unknown, though MVP-alpha is required for normal vault structure. The polypeptide is Major vault protein alpha (mvpA) (Dictyostelium discoideum (Social amoeba)).